The following is a 75-amino-acid chain: Dermaseptin-DA2 (75 aa).

The N-terminal stretch at 1–22 (MALVKKSLFLVLFLGLVSLSIC) is a signal peptide. Residues 23–42 (EEKRENEDEEEQEDDEQSEE) constitute a propeptide that is removed on maturation.

It belongs to the frog skin active peptide (FSAP) family. Dermaseptin subfamily. As to expression, expressed by the skin glands.

The protein localises to the secreted. In terms of biological role, possesses a potent antimicrobial activity against Gram-positive and Gram-negative bacteria. Probably acts by disturbing membrane functions with its amphipathic structure. The protein is Dermaseptin-DA2 of Agalychnis dacnicolor (Giant Mexican leaf frog).